A 364-amino-acid chain; its full sequence is Phosphoserine aminotransferase (364 aa).

Arg46 serves as a coordination point for L-glutamate. Residues 80-81 (AR), Trp106, Thr157, Asp176, and Gln199 contribute to the pyridoxal 5'-phosphate site. Lys200 is modified (N6-(pyridoxal phosphate)lysine). Position 241 to 242 (241 to 242 (NT)) interacts with pyridoxal 5'-phosphate.

This sequence belongs to the class-V pyridoxal-phosphate-dependent aminotransferase family. SerC subfamily. In terms of assembly, homodimer. It depends on pyridoxal 5'-phosphate as a cofactor.

It localises to the cytoplasm. It catalyses the reaction O-phospho-L-serine + 2-oxoglutarate = 3-phosphooxypyruvate + L-glutamate. It carries out the reaction 4-(phosphooxy)-L-threonine + 2-oxoglutarate = (R)-3-hydroxy-2-oxo-4-phosphooxybutanoate + L-glutamate. It functions in the pathway amino-acid biosynthesis; L-serine biosynthesis; L-serine from 3-phospho-D-glycerate: step 2/3. The protein operates within cofactor biosynthesis; pyridoxine 5'-phosphate biosynthesis; pyridoxine 5'-phosphate from D-erythrose 4-phosphate: step 3/5. Its function is as follows. Catalyzes the reversible conversion of 3-phosphohydroxypyruvate to phosphoserine and of 3-hydroxy-2-oxo-4-phosphonooxybutanoate to phosphohydroxythreonine. This is Phosphoserine aminotransferase from Vibrio parahaemolyticus serotype O3:K6 (strain RIMD 2210633).